Reading from the N-terminus, the 336-residue chain is Phosphate acyltransferase (336 aa).

Belongs to the PlsX family. As to quaternary structure, homodimer. Probably interacts with PlsY.

The protein resides in the cytoplasm. The enzyme catalyses a fatty acyl-[ACP] + phosphate = an acyl phosphate + holo-[ACP]. It functions in the pathway lipid metabolism; phospholipid metabolism. In terms of biological role, catalyzes the reversible formation of acyl-phosphate (acyl-PO(4)) from acyl-[acyl-carrier-protein] (acyl-ACP). This enzyme utilizes acyl-ACP as fatty acyl donor, but not acyl-CoA. The chain is Phosphate acyltransferase from Pseudomonas putida (strain GB-1).